The following is a 1184-amino-acid chain: DNA-directed RNA polymerase subunit beta (1184 aa).

A disordered region spans residues 1160–1184 (DDDFTNQNDAFNIVQPENAAAEKTE).

The protein belongs to the RNA polymerase beta chain family. In terms of assembly, the RNAP catalytic core consists of 2 alpha, 1 beta, 1 beta' and 1 omega subunit. When a sigma factor is associated with the core the holoenzyme is formed, which can initiate transcription.

It catalyses the reaction RNA(n) + a ribonucleoside 5'-triphosphate = RNA(n+1) + diphosphate. DNA-dependent RNA polymerase catalyzes the transcription of DNA into RNA using the four ribonucleoside triphosphates as substrates. The chain is DNA-directed RNA polymerase subunit beta from Listeria welshimeri serovar 6b (strain ATCC 35897 / DSM 20650 / CCUG 15529 / CIP 8149 / NCTC 11857 / SLCC 5334 / V8).